Consider the following 405-residue polypeptide: Low-salt glycan biosynthesis sulfotransferase Agl7 (405 aa).

Positions 24, 201, and 202 each coordinate Ca(2+).

Belongs to the sulfatase family. It depends on Ca(2+) as a cofactor.

Its pathway is protein modification; protein glycosylation. The protein operates within cell surface structure biogenesis; S-layer biogenesis. Involved in N-glycan biosynthetic pathway that takes place under low-salt conditions (1.75 M instead of 3.4 M). Participates in the formation of the tetrasaccharide present at 'Asn-532' of S-layer glycoprotein Csg, consisting of a sulfated hexose, 2 hexoses and rhamnose. Mediates sulfation of sugar 1 in the tetrasaccharide. The polypeptide is Low-salt glycan biosynthesis sulfotransferase Agl7 (Haloferax volcanii (strain ATCC 29605 / DSM 3757 / JCM 8879 / NBRC 14742 / NCIMB 2012 / VKM B-1768 / DS2) (Halobacterium volcanii)).